The chain runs to 652 residues: MKLLWQVTVHHTWNAVLLPVVYLTAQVWILCAAIAAAASAGPQNCPSVCSCSNQFSKVVCTRRGLSEVPQGIPSNTRYLNLMENNIQMIQADTFRHLHHLEVLQLGRNSIRQIEVGAFNGLASLNTLELFDNWLTVIPSGAFEYLSKLRELWLRNNPIESIPSYAFNRVPSLMRLDLGELKKLEYISEGAFEGLFNLKYLNLGMCNIKDMPNLTPLVGLEELEMSGNHFPEIRPGSFHGLSSLKKLWVMNSQVSLIERNAFDGLASLVELNLAHNNLSSLPHDLFTPLRYLVELHLHHNPWNCDCDILWLAWWLREYIPTNSTCCGRCHAPMHMRGRYLVEVDQAAFQCSAPFIMDAPRDLNISEDRMAELKCRTPPMSSVKWLLPNGTVLSHASRHPRISVLNDGTLNFSRVLLIDTGVYTCMVTNVAGNSNASAYLNVSSAELNTPNFSFFTTVTVETTEISPEDITRKYKPVPTTSTGYQPAYTTSTTVLIQTTRVPKQVPVPSTDTTDKMQTSLDEVMKTTKIIIGCFVAVTLLAAAMLIVFYKLRKRHQQRSTVTAARTVEIIQVDEDIPAAAPAAATAAPSGVSGEGAVVLPTIHDHINYNTYKPAHGAHWTENSLGNSLHPTVTTISEPYIIQTHTKDKVQETQI.

An N-terminal signal peptide occupies residues 1 to 40 (MKLLWQVTVHHTWNAVLLPVVYLTAQVWILCAAIAAAASA). Residues 41-74 (GPQNCPSVCSCSNQFSKVVCTRRGLSEVPQGIPS) form the LRRNT domain. Residues 41–526 (GPQNCPSVCS…SLDEVMKTTK (486 aa)) lie on the Extracellular side of the membrane. 2 disulfide bridges follow: Cys45-Cys51 and Cys49-Cys60. 9 LRR repeats span residues 75-96 (NTRY…TFRH), 99-120 (HLEV…AFNG), 123-144 (SLNT…AFEY), 147-168 (KLRE…AFNR), 171-193 (SLMR…AFEG), 196-217 (NLKY…TPLV), 218-239 (GLEE…SFHG), 242-263 (SLKK…AFDG), and 266-287 (SLVE…LFTP). Residues Asn276, Asn321, Asn362, Asn387, Asn409, Asn433, Asn439, and Asn449 are each glycosylated (N-linked (GlcNAc...) asparagine). The LRRCT domain occupies 299–351 (NPWNCDCDILWLAWWLREYIPTNSTCCGRCHAPMHMRGRYLVEVDQAAFQCSA). Disulfide bonds link Cys303–Cys328 and Cys305–Cys349. Positions 352 to 441 (PFIMDAPRDL…SNASAYLNVS (90 aa)) constitute an Ig-like domain. Cys373 and Cys423 are joined by a disulfide. Residues 527–547 (IIIGCFVAVTLLAAAMLIVFY) form a helical membrane-spanning segment. Topologically, residues 548 to 652 (KLRKRHQQRS…TKDKVQETQI (105 aa)) are cytoplasmic.

Interacts (via LRR repeats) with NTNG2. Interacts with DLG4. Forms a complex with DLG4 and with NMDA receptors. N-glycosylated. As to expression, specifically expressed in brain. In the hippocampus, parietal cortex and piriform cortex expressed in proximal segments of CA1 pyramidal neurons.

The protein resides in the membrane. It localises to the postsynaptic cell membrane. Synaptic adhesion protein. Regulates the formation of exitatory synapses through the recruitment of pre-and-postsynaptic proteins. Organize the lamina/pathway-specific differentiation of dendrites. Plays an important role for auditory synaptic responses. Involved in the suppression of glioma. This chain is Leucine-rich repeat-containing protein 4 (Lrrc4), found in Mus musculus (Mouse).